A 345-amino-acid polypeptide reads, in one-letter code: Phosphoribosylformylglycinamidine cyclo-ligase (345 aa).

This sequence belongs to the AIR synthase family.

It is found in the cytoplasm. The catalysed reaction is 2-formamido-N(1)-(5-O-phospho-beta-D-ribosyl)acetamidine + ATP = 5-amino-1-(5-phospho-beta-D-ribosyl)imidazole + ADP + phosphate + H(+). Its pathway is purine metabolism; IMP biosynthesis via de novo pathway; 5-amino-1-(5-phospho-D-ribosyl)imidazole from N(2)-formyl-N(1)-(5-phospho-D-ribosyl)glycinamide: step 2/2. In Escherichia coli O7:K1 (strain IAI39 / ExPEC), this protein is Phosphoribosylformylglycinamidine cyclo-ligase.